Consider the following 562-residue polypeptide: Potassium-transporting ATPase potassium-binding subunit (562 aa).

The next 12 membrane-spanning stretches (helical) occupy residues 6–26 (FLLI…LGGF), 62–82 (YALA…VLLM), 132–152 (GLTV…FALI), 175–195 (LYVL…QGVL), 253–273 (FVQM…FGQV), 283–303 (LIWA…YAEL), 327–347 (FGIL…CGAV), 356–376 (ALGG…FGGV), 379–399 (GLYG…LMIG), 416–436 (MTAL…ALAL), 483–503 (LLLA…VLAI), and 526–546 (LFIG…FIPA).

It belongs to the KdpA family. In terms of assembly, the system is composed of three essential subunits: KdpA, KdpB and KdpC.

It localises to the cell inner membrane. Functionally, part of the high-affinity ATP-driven potassium transport (or Kdp) system, which catalyzes the hydrolysis of ATP coupled with the electrogenic transport of potassium into the cytoplasm. This subunit binds the periplasmic potassium ions and delivers the ions to the membrane domain of KdpB through an intramembrane tunnel. The chain is Potassium-transporting ATPase potassium-binding subunit from Yersinia pseudotuberculosis serotype IB (strain PB1/+).